The sequence spans 440 residues: Sorting nexin-31 (440 aa).

Residues 1–109 form the PX domain; that stretch reads MKMHFCIPVS…EFLKLAQLNT (109 aa).

It belongs to the sorting nexin family. As to quaternary structure, interacts with CCDC22, CCDC93, VPS26C and VPS35L, associates with the retriever and CCC complexes.

Functionally, may be involved in protein trafficking. The sequence is that of Sorting nexin-31 (SNX31) from Homo sapiens (Human).